Here is a 369-residue protein sequence, read N- to C-terminus: Flagellar P-ring protein (369 aa).

Residues 1–22 (MTKFKHLLALAALLLAAGAAQA) form the signal peptide.

It belongs to the FlgI family. As to quaternary structure, the basal body constitutes a major portion of the flagellar organelle and consists of four rings (L,P,S, and M) mounted on a central rod.

The protein resides in the periplasm. It is found in the bacterial flagellum basal body. Its function is as follows. Assembles around the rod to form the L-ring and probably protects the motor/basal body from shearing forces during rotation. The chain is Flagellar P-ring protein from Pseudomonas aeruginosa (strain LESB58).